The following is a 235-amino-acid chain: Orotidine 5'-phosphate decarboxylase (235 aa).

Substrate-binding positions include Asp-10, Lys-33, 60 to 69, Thr-123, Arg-185, Gln-194, Gly-214, and Arg-215; that span reads DLKMHDIPNT. Lys-62 acts as the Proton donor in catalysis.

The protein belongs to the OMP decarboxylase family. Type 1 subfamily. In terms of assembly, homodimer.

It carries out the reaction orotidine 5'-phosphate + H(+) = UMP + CO2. Its pathway is pyrimidine metabolism; UMP biosynthesis via de novo pathway; UMP from orotate: step 2/2. Catalyzes the decarboxylation of orotidine 5'-monophosphate (OMP) to uridine 5'-monophosphate (UMP). The chain is Orotidine 5'-phosphate decarboxylase from Lactobacillus acidophilus (strain ATCC 700396 / NCK56 / N2 / NCFM).